Here is a 306-residue protein sequence, read N- to C-terminus: tRNA dimethylallyltransferase (306 aa).

11–18 serves as a coordination point for ATP; the sequence is GPTAVGKS. Residue 13 to 18 coordinates substrate; the sequence is TAVGKS. The interaction with substrate tRNA stretch occupies residues 35–38; that stretch reads DSIQ.

Belongs to the IPP transferase family. As to quaternary structure, monomer. Requires Mg(2+) as cofactor.

It carries out the reaction adenosine(37) in tRNA + dimethylallyl diphosphate = N(6)-dimethylallyladenosine(37) in tRNA + diphosphate. Catalyzes the transfer of a dimethylallyl group onto the adenine at position 37 in tRNAs that read codons beginning with uridine, leading to the formation of N6-(dimethylallyl)adenosine (i(6)A). The protein is tRNA dimethylallyltransferase of Borreliella burgdorferi (strain ATCC 35210 / DSM 4680 / CIP 102532 / B31) (Borrelia burgdorferi).